A 77-amino-acid chain; its full sequence is UPF0291 protein EAT1b_0405 (77 aa).

The interval 53-77 (KVVDPDGNDVTPEKLKEDQKRYRGE) is disordered. Over residues 63 to 77 (TPEKLKEDQKRYRGE) the composition is skewed to basic and acidic residues.

The protein belongs to the UPF0291 family.

Its subcellular location is the cytoplasm. This chain is UPF0291 protein EAT1b_0405, found in Exiguobacterium sp. (strain ATCC BAA-1283 / AT1b).